The following is a 952-amino-acid chain: Germ layers disorganized gldi-3 (952 aa).

In terms of domain architecture, FHA spans 39–100; the sequence is KSFGRATTND…NGTYINDRRL (62 aa). Disordered stretches follow at residues 174–220, 483–639, and 652–866; these read IGPR…MPST, GTPK…ESTV, and AAQS…KERC. 2 stretches are compositionally biased toward polar residues: residues 179–195 and 202–220; these read PSTT…STNG and NRAS…MPST. Acidic residues predominate over residues 523–537; sequence EESEILDVVGTDEPD. Residues 553–568 are compositionally biased toward basic and acidic residues; it reads PEDHGRQTQNKIDKNV. 2 stretches are compositionally biased toward polar residues: residues 569–584 and 600–620; these read RMSS…TPSA and VTSS…NPVS. Residues 662–679 show a composition bias toward low complexity; the sequence is SVSNTTSSTSASLTTSSV. Basic and acidic residues predominate over residues 685-706; it reads TSSKENTDQKRAVDDSSDESAR. Low complexity predominate over residues 715-724; the sequence is SATPSSTPAE. Basic and acidic residues predominate over residues 725–742; that stretch reads SSKRKQKDTSSRKMKQLD. Positions 761-772 are enriched in basic residues; that stretch reads TKRRDKARRSTR. Over residues 789–800 the composition is skewed to acidic residues; the sequence is VEDEDETDDVQE. Composition is skewed to basic and acidic residues over residues 823 to 832 and 856 to 866; these read IKERKTKDKD and PPKTEPSKERC.

It localises to the nucleus. Functionally, potential transcription factor that may play a role in the regulation of genes involved in cell cycle G1/S transition. May bind to regulatory elements of genes. This is Germ layers disorganized gldi-3 from Caenorhabditis elegans.